Reading from the N-terminus, the 1162-residue chain is MPKRTDIKSILIIGAGPIVIGQACEFDYSGTQACKALKEEGYRIILVNSNPATIMTDPDLADATYIEPITPEVVAKIIAKERPDAILPTMGGQTALNTALSLRRMGVLERYNVEMIGAKAEAIDKAEDRALFREAMKKIGLDTPGSMLANATEIKDEDRKRHEAKRAEVKAQFSGDELDKALDKLETEWQLGEVERKQRYMSHALAKAAQALDVVGLPAIIRPSFTLGGTGGGIAYNRQEFFEIIERGLDASPTTEVLIEESVLGWKEYEMEVVRDHADNCIIICSIENLDPMGVHTGDSITVAPALTLTDKEYQIMRNASIAVLREIGVETGGSNVQFAINPANGRMIVIEMNPRVSRSSALASKATGFPIAKVAAKLAVGYTLDELDNDITGGATPASFEPSIDYVVTKIPRFAFEKFPGSSPILTTAMKSVGEVMAIGRTFQESLQKALRGLETGLTGFDEIAIPNIEEGDEKNAIRAAIGTPTPDCLRMVAQAMRLGLSVEQVHDASKIDPWFLEQIESIVKTEERIREHGLPQDAENLRMLKAMGFSDARLASLTAKDAEDVAKLRADLDVHPVYKRIDTCAAEFASPTAYMYSTYETPFVGQPRSEAEVSDRKKVVILGGGPNRIGQGIEFDYCCCHAAFALGDADYEAIMVNCNPETVSTDYDTSDRLYFEPLTAEDVLEILRVEKQKGTLHGVIVQFGGQTPLKLANALEKAGIPILGTSPDAIDLAEDRDRFQKLLIKLDLNQPKNGIAYSVEQARLVAADLGFPLVVRPSYVLGGRAMQIIHDERGLQAYLLDTVPELVPEDIKAKYPNDKTGQINTLLGKNPLLFDTYLTEAIEVDVDCLCDGKDSLVAGIMEHIEEAGIHSGDSACSLPVHTLSPEIVAELERQTAALATALHVGGLMNVQFAIKDGEIFILEVNPRASRTVPFVAKTVGTPIAKVAARIMAGESLEAAFDAYGGKPQPTARPHIAVKEAVFPFARFPGVDTLLGPEMRSTGEVMGLDYDYALAFAKAQLGAGVELPREGTVFVSVRDEDKERVLGPVRKLASIGFKVMATGGTQKFLEANGVESTKINKVIEGRPHVEDAIRNRQIHLVFNTTDSASAVSDSKSIRRATLMQKLPYYTTMAGAESAAEAIAALKAGSLEVRPLQDYFRS.

Positions 1 to 456 are carboxyphosphate synthetic domain; sequence MPKRTDIKSI…SLQKALRGLE (456 aa). ATP is bound by residues R129, R222, G228, G229, E261, V263, E268, G294, V295, H296, Q338, and E352. Residues 186 to 381 form the ATP-grasp 1 domain; it reads ETEWQLGEVE…IAKVAAKLAV (196 aa). Residues Q338, E352, and N354 each coordinate Mg(2+). Residues Q338, E352, and N354 each contribute to the Mn(2+) site. The oligomerization domain stretch occupies residues 457 to 613; the sequence is TGLTGFDEIA…PFVGQPRSEA (157 aa). Residues 614–1025 are carbamoyl phosphate synthetic domain; the sequence is EVSDRKKVVI…AFAKAQLGAG (412 aa). Positions 742–954 constitute an ATP-grasp 2 domain; sequence QKLLIKLDLN…IAKVAARIMA (213 aa). Residues R778, T838, L840, E845, G870, I871, H872, S873, Q913, and E925 each coordinate ATP. Mg(2+) is bound by residues Q913, E925, and N927. The Mn(2+) site is built by Q913, E925, and N927. The 137-residue stretch at 1026 to 1162 folds into the MGS-like domain; that stretch reads VELPREGTVF…VRPLQDYFRS (137 aa). Residues 1026-1162 form an allosteric domain region; sequence VELPREGTVF…VRPLQDYFRS (137 aa).

Belongs to the CarB family. As to quaternary structure, composed of two chains; the small (or glutamine) chain promotes the hydrolysis of glutamine to ammonia, which is used by the large (or ammonia) chain to synthesize carbamoyl phosphate. Tetramer of heterodimers (alpha,beta)4. The cofactor is Mg(2+). Mn(2+) serves as cofactor.

It catalyses the reaction hydrogencarbonate + L-glutamine + 2 ATP + H2O = carbamoyl phosphate + L-glutamate + 2 ADP + phosphate + 2 H(+). The enzyme catalyses hydrogencarbonate + NH4(+) + 2 ATP = carbamoyl phosphate + 2 ADP + phosphate + 2 H(+). Its pathway is amino-acid biosynthesis; L-arginine biosynthesis; carbamoyl phosphate from bicarbonate: step 1/1. It participates in pyrimidine metabolism; UMP biosynthesis via de novo pathway; (S)-dihydroorotate from bicarbonate: step 1/3. In terms of biological role, large subunit of the glutamine-dependent carbamoyl phosphate synthetase (CPSase). CPSase catalyzes the formation of carbamoyl phosphate from the ammonia moiety of glutamine, carbonate, and phosphate donated by ATP, constituting the first step of 2 biosynthetic pathways, one leading to arginine and/or urea and the other to pyrimidine nucleotides. The large subunit (synthetase) binds the substrates ammonia (free or transferred from glutamine from the small subunit), hydrogencarbonate and ATP and carries out an ATP-coupled ligase reaction, activating hydrogencarbonate by forming carboxy phosphate which reacts with ammonia to form carbamoyl phosphate. In Brucella suis biovar 1 (strain 1330), this protein is Carbamoyl phosphate synthase large chain.